A 370-amino-acid polypeptide reads, in one-letter code: GDSL esterase/lipase At1g33811 (370 aa).

The N-terminal stretch at 1–24 is a signal peptide; it reads MGILRFVLLISLNLVLFGFKTTVS. The active-site Nucleophile is the Ser-41. Residues Asn-203, Asn-241, and Asn-242 are each glycosylated (N-linked (GlcNAc...) asparagine). Active-site residues include Asp-336 and His-339.

This sequence belongs to the 'GDSL' lipolytic enzyme family.

It localises to the secreted. The sequence is that of GDSL esterase/lipase At1g33811 from Arabidopsis thaliana (Mouse-ear cress).